The sequence spans 185 residues: Elongation factor P (185 aa).

This sequence belongs to the elongation factor P family.

Its subcellular location is the cytoplasm. It functions in the pathway protein biosynthesis; polypeptide chain elongation. Involved in peptide bond synthesis. Stimulates efficient translation and peptide-bond synthesis on native or reconstituted 70S ribosomes in vitro. Probably functions indirectly by altering the affinity of the ribosome for aminoacyl-tRNA, thus increasing their reactivity as acceptors for peptidyl transferase. The chain is Elongation factor P from Bacillus cytotoxicus (strain DSM 22905 / CIP 110041 / 391-98 / NVH 391-98).